Reading from the N-terminus, the 68-residue chain is Antimicrobial peptide UyCT5 (68 aa).

An N-terminal signal peptide occupies residues 1-23 (MKNQFAILLLAVVFLQLISQSDA). L36 bears the Leucine amide mark. Residues 40–68 (GLKNADRLDELFDGDISDADLDFLRELMR) constitute a propeptide that is removed on maturation.

It belongs to the non-disulfide-bridged peptide (NDBP) superfamily. Short antimicrobial peptide (group 4) family. Expressed by the venom gland.

The protein localises to the secreted. Its subcellular location is the target cell membrane. Functionally, antimicrobial peptide that inhibits the growth of Gram-positive (S.aureus, MIC=1 uM) and Gram-negative bacteria (E.coli, MIC=15 uM and P.aeruginosa, MIC=2 uM). It also shows 37% of hemolysis when 15 uM are tested (93% at 50 uM). This is Antimicrobial peptide UyCT5 from Urodacus yaschenkoi (Inland robust scorpion).